The following is a 487-amino-acid chain: Serine/threonine-protein kinase 4 (487 aa).

The residue at position 1 (Met-1) is an N-acetylmethionine. Position 3 is a phosphothreonine (Thr-3). Positions 30-281 (FDVLEKLGEG…ATQLLQHPFV (252 aa)) constitute a Protein kinase domain. ATP contacts are provided by residues 36-44 (LGEGSYGSV) and Lys-59. The active-site Proton acceptor is the Asp-149. Position 183 is a phosphothreonine; by autocatalysis (Thr-183). Ser-265 carries the post-translational modification Phosphoserine. Residues 290–310 (LRDLINEAMDVKLKRQESQQR) adopt a coiled-coil conformation. Positions 303-312 (KRQESQQREV) are enriched in basic and acidic residues. Residues 303-332 (KRQESQQREVDQDDEENSEEDEMDSGTMVR) are disordered. Residues 313–326 (DQDDEENSEEDEMD) are compositionally biased toward acidic residues. Ser-320 is modified (phosphoserine). Phosphothreonine occurs at positions 340 and 367. Phosphothreonine; by PKB/AKT1 is present on Thr-387. Phosphoserine is present on residues Ser-410 and Ser-414. The residue at position 433 (Tyr-433) is a Phosphotyrosine. The region spanning 433-480 (YEFLKSWTVEDLQKRLLALDPMMEQEIEEIRQKYQSKRQPILDAIEAK) is the SARAH domain.

The protein belongs to the protein kinase superfamily. STE Ser/Thr protein kinase family. STE20 subfamily. In terms of assembly, homodimer; mediated via the coiled-coil region. Interacts with NORE1, which inhibits autoactivation. Interacts with and stabilizes SAV1. Interacts with RASSF1. Interacts with FOXO3. Interacts with RASSF2 (via SARAH domain). Interacts with AR, PKB/AKT1, TNNI3 and SIRT1. Interacts with DLG5 (via PDZ domain 3). Interacts with MARK3 and SCRIB in the presence of DLG5. It depends on Mg(2+) as a cofactor. Post-translationally, autophosphorylated on serine and threonine residues. Phosphorylation at Thr-387 by PKB/AKT1, leads to inhibition of its: kinase activity, nuclear translocation and autophosphorylation at Thr-183. It also diminishes its cleavage by caspases and its ability to phosphorylate FOXO3. In terms of processing, proteolytically cleaved by caspase-3 during apoptosis at Asp-326 and Asp-349 resulting in a 37 kDa or a 39 kDa subunit respectively. The 39 kDa subunit is further cleaved into the 37 kDa form. Proteolytic cleavage results in kinase activation and nuclear translocation of the truncated form (MST1/N). It is less likely that cleavage at Asp-349 is a prerequisite for activation as this site is not conserved in the murine ortholog.

The protein localises to the cytoplasm. It localises to the nucleus. The catalysed reaction is L-seryl-[protein] + ATP = O-phospho-L-seryl-[protein] + ADP + H(+). It catalyses the reaction L-threonyl-[protein] + ATP = O-phospho-L-threonyl-[protein] + ADP + H(+). With respect to regulation, inhibited by the C-terminal non-catalytic region. Activated by caspase-cleavage. Full activation also requires homodimerization and autophosphorylation of Thr-183. Activated by RASSF1 which acts by preventing its dephosphorylation. Stress-activated, pro-apoptotic kinase which, following caspase-cleavage, enters the nucleus and induces chromatin condensation followed by internucleosomal DNA fragmentation. Key component of the Hippo signaling pathway which plays a pivotal role in organ size control and tumor suppression by restricting proliferation and promoting apoptosis. The core of this pathway is composed of a kinase cascade wherein STK3/MST2 and STK4/MST1, in complex with its regulatory protein SAV1, phosphorylates and activates LATS1/2 in complex with its regulatory protein MOB1, which in turn phosphorylates and inactivates YAP1 oncoprotein and WWTR1/TAZ. Phosphorylation of YAP1 by LATS2 inhibits its translocation into the nucleus to regulate cellular genes important for cell proliferation, cell death, and cell migration. STK3/MST2 and STK4/MST1 are required to repress proliferation of mature hepatocytes, to prevent activation of facultative adult liver stem cells (oval cells), and to inhibit tumor formation. Phosphorylates 'Ser-14' of histone H2B (H2BS14ph) during apoptosis. Phosphorylates FOXO3 upon oxidative stress, which results in its nuclear translocation and cell death initiation. Phosphorylates MOBKL1A, MOBKL1B and RASSF2. Phosphorylates TNNI3 (cardiac Tn-I) and alters its binding affinity to TNNC1 (cardiac Tn-C) and TNNT2 (cardiac Tn-T). Phosphorylates FOXO1 on 'Ser-212' and regulates its activation and stimulates transcription of PMAIP1 in a FOXO1-dependent manner. Phosphorylates SIRT1 and inhibits SIRT1-mediated p53/TP53 deacetylation, thereby promoting p53/TP53 dependent transcription and apoptosis upon DNA damage. Acts as an inhibitor of PKB/AKT1. Phosphorylates AR on 'Ser-650' and suppresses its activity by intersecting with PKB/AKT1 signaling and antagonizing formation of AR-chromatin complexes. This Aotus nancymaae (Ma's night monkey) protein is Serine/threonine-protein kinase 4 (STK4).